The following is a 411-amino-acid chain: Putative competence-damage inducible protein (411 aa).

Belongs to the CinA family.

The sequence is that of Putative competence-damage inducible protein from Clostridium acetobutylicum (strain ATCC 824 / DSM 792 / JCM 1419 / IAM 19013 / LMG 5710 / NBRC 13948 / NRRL B-527 / VKM B-1787 / 2291 / W).